A 400-amino-acid chain; its full sequence is Probable tRNA pseudouridine synthase D (400 aa).

Asp-89 serves as the catalytic Nucleophile. The TRUD domain maps to 162 to 357; sequence GVPNYYGLQR…AGGDRKPALL (196 aa).

This sequence belongs to the pseudouridine synthase TruD family.

The catalysed reaction is uridine(13) in tRNA = pseudouridine(13) in tRNA. Functionally, could be responsible for synthesis of pseudouridine from uracil-13 in transfer RNAs. This is Probable tRNA pseudouridine synthase D from Methanopyrus kandleri (strain AV19 / DSM 6324 / JCM 9639 / NBRC 100938).